Consider the following 312-residue polypeptide: Methionyl-tRNA formyltransferase (312 aa).

A (6S)-5,6,7,8-tetrahydrofolate-binding site is contributed by 113–116 (SLLP).

It belongs to the Fmt family.

It carries out the reaction L-methionyl-tRNA(fMet) + (6R)-10-formyltetrahydrofolate = N-formyl-L-methionyl-tRNA(fMet) + (6S)-5,6,7,8-tetrahydrofolate + H(+). Its function is as follows. Attaches a formyl group to the free amino group of methionyl-tRNA(fMet). The formyl group appears to play a dual role in the initiator identity of N-formylmethionyl-tRNA by promoting its recognition by IF2 and preventing the misappropriation of this tRNA by the elongation apparatus. This chain is Methionyl-tRNA formyltransferase, found in Francisella philomiragia subsp. philomiragia (strain ATCC 25017 / CCUG 19701 / FSC 153 / O#319-036).